The sequence spans 257 residues: MPVSETTDRQASNGGDGPALPINELFYSLQGEGKLAGTPSVFVRTSGCNLRCWFCDSYHTSWEPTHATMSVDDIIAEVQSYEHADHVVLTGGEPLLHDDAVVLLDRLAALGYHTTVETNGTIHRDAPIDLASVSPKLASSTPTAETDPKGDGEWAARHDARRIDVATLGALADDYDTQLKFVVTDPSDMPEIESLLAEIRTATDTRIGDEDVVLMPEGTTHAELDARRNEVATLAMEHGYRYTPRLHVALWNDAPET.

Residues 29 to 31 (LQG) and Arg44 each bind substrate. In terms of domain architecture, Radical SAM core spans 35–253 (LAGTPSVFVR…PRLHVALWND (219 aa)). Cys48, Cys52, and Cys55 together coordinate [4Fe-4S] cluster. Ser57 provides a ligand contact to Mg(2+). Thr90 is a substrate binding site. Gly92 is a binding site for S-adenosyl-L-methionine. The interval 133-153 (VSPKLASSTPTAETDPKGDGE) is disordered.

Belongs to the radical SAM superfamily. 7-carboxy-7-deazaguanine synthase family. Homodimer. The cofactor is [4Fe-4S] cluster. Requires S-adenosyl-L-methionine as cofactor. Mg(2+) is required as a cofactor.

The enzyme catalyses 6-carboxy-5,6,7,8-tetrahydropterin + H(+) = 7-carboxy-7-deazaguanine + NH4(+). It functions in the pathway purine metabolism; 7-cyano-7-deazaguanine biosynthesis. Functionally, catalyzes the complex heterocyclic radical-mediated conversion of 6-carboxy-5,6,7,8-tetrahydropterin (CPH4) to 7-carboxy-7-deazaguanine (CDG), a step common to the biosynthetic pathways of all 7-deazapurine-containing compounds. This Halobacterium salinarum (strain ATCC 29341 / DSM 671 / R1) protein is 7-carboxy-7-deazaguanine synthase.